The primary structure comprises 189 residues: Probable nicotinate-nucleotide adenylyltransferase (189 aa).

It belongs to the NadD family.

It carries out the reaction nicotinate beta-D-ribonucleotide + ATP + H(+) = deamido-NAD(+) + diphosphate. The protein operates within cofactor biosynthesis; NAD(+) biosynthesis; deamido-NAD(+) from nicotinate D-ribonucleotide: step 1/1. In terms of biological role, catalyzes the reversible adenylation of nicotinate mononucleotide (NaMN) to nicotinic acid adenine dinucleotide (NaAD). This chain is Probable nicotinate-nucleotide adenylyltransferase, found in Bacillus pumilus (strain SAFR-032).